The primary structure comprises 291 residues: Gamma-sarcoglycan (291 aa).

Residues 38–58 (LFVLLLLIILLVNFALTIWIL) form a helical; Signal-anchor for type II membrane protein membrane-spanning segment. Topologically, residues 59–291 (KVMWFSPTGM…TCHEHSHICL (233 aa)) are extracellular. N-linked (GlcNAc...) asparagine glycosylation occurs at N110. 2 cysteine pairs are disulfide-bonded: C265-C290 and C267-C283.

The protein belongs to the sarcoglycan beta/delta/gamma/zeta family. As to quaternary structure, interacts with the syntrophin SNTA1. Cross-link to form 2 major subcomplexes: one consisting of SGCB, SGCD and SGCG and the other consisting of SGCB and SGCD. The association between SGCB and SGCG is particularly strong while SGCA is loosely associated with the other sarcoglycans. Interacts with FLNC. Post-translationally, disulfide bonds are present.

The protein localises to the cell membrane. It is found in the sarcolemma. The protein resides in the cytoplasm. It localises to the cytoskeleton. Component of the sarcoglycan complex, a subcomplex of the dystrophin-glycoprotein complex which forms a link between the F-actin cytoskeleton and the extracellular matrix. In Canis lupus familiaris (Dog), this protein is Gamma-sarcoglycan (SGCG).